Here is a 464-residue protein sequence, read N- to C-terminus: UDP-N-acetylmuramate--L-alanine ligase (464 aa).

111 to 117 (GAHGKTT) is an ATP binding site.

This sequence belongs to the MurCDEF family.

It localises to the cytoplasm. It catalyses the reaction UDP-N-acetyl-alpha-D-muramate + L-alanine + ATP = UDP-N-acetyl-alpha-D-muramoyl-L-alanine + ADP + phosphate + H(+). Its pathway is cell wall biogenesis; peptidoglycan biosynthesis. Functionally, cell wall formation. In Dictyoglomus turgidum (strain DSM 6724 / Z-1310), this protein is UDP-N-acetylmuramate--L-alanine ligase.